A 201-amino-acid chain; its full sequence is 3-isopropylmalate dehydratase small subunit (201 aa).

This sequence belongs to the LeuD family. LeuD type 1 subfamily. In terms of assembly, heterodimer of LeuC and LeuD.

The catalysed reaction is (2R,3S)-3-isopropylmalate = (2S)-2-isopropylmalate. The protein operates within amino-acid biosynthesis; L-leucine biosynthesis; L-leucine from 3-methyl-2-oxobutanoate: step 2/4. In terms of biological role, catalyzes the isomerization between 2-isopropylmalate and 3-isopropylmalate, via the formation of 2-isopropylmaleate. The protein is 3-isopropylmalate dehydratase small subunit of Cereibacter sphaeroides (strain ATCC 17029 / ATH 2.4.9) (Rhodobacter sphaeroides).